A 443-amino-acid chain; its full sequence is Amino-acid acetyltransferase (443 aa).

Residues 296 to 436 (EQIRRATIND…KMYNYQRRSK (141 aa)) form the N-acetyltransferase domain.

It belongs to the acetyltransferase family. ArgA subfamily. In terms of assembly, homohexamer.

It is found in the cytoplasm. It catalyses the reaction L-glutamate + acetyl-CoA = N-acetyl-L-glutamate + CoA + H(+). It functions in the pathway amino-acid biosynthesis; L-arginine biosynthesis; N(2)-acetyl-L-ornithine from L-glutamate: step 1/4. The chain is Amino-acid acetyltransferase from Salmonella arizonae (strain ATCC BAA-731 / CDC346-86 / RSK2980).